We begin with the raw amino-acid sequence, 136 residues long: uncharacterized protein (136 aa).

This is an uncharacterized protein from Acheta domesticus (House cricket).